The chain runs to 3477 residues: Abnormal spindle-like microcephaly-associated protein (3477 aa).

A disordered region spans residues Met1–Glu30. Phosphoserine is present on residues Ser280, Ser283, Ser367, and Ser392. Residues Ile308–Gln409 are sufficient for interaction with KATNA1:KATNB1. Positions Leu415 to Gln424 are enriched in polar residues. Disordered regions lie at residues Leu415–Gly443 and Lys559–Met581. Residue Ser425 is modified to Phosphoserine. Residues Asn560–Ser570 are compositionally biased toward polar residues. Ser605 bears the Phosphoserine mark. The Calponin-homology (CH) 1 domain maps to Lys920–Gln1056. Residues Val1057–Ser1078 adopt a coiled-coil conformation. At Ser1103 the chain carries Phosphoserine. A Calponin-homology (CH) 2 domain is found at Ser1110 to Leu1261. IQ domains are found at residues Gln1347 to Gln1378, Tyr1393 to Ser1422, Leu1582 to Gln1613, Thr1632 to Lys1661, Ile1655 to Lys1684, Met1728 to Ser1757, Gln1751 to Gln1782, Val1801 to Lys1830, Gln1824 to Lys1853, Thr1874 to Lys1903, Glu1897 to Gln1928, Leu1947 to Gln1978, Gln1970 to Gln2001, Thr2020 to Thr2049, Cys2043 to Gln2074, Leu2093 to Lys2124, Met2116 to Gln2147, Ile2166 to Gln2197, Met2189 to Thr2218, Leu2239 to Gln2270, Met2262 to Gln2293, Val2311 to Gln2342, Met2334 to Gln2365, Gln2384 to Gln2415, Met2407 to Gln2438, Leu2457 to Gln2488, Gln2530 to Gln2561, Gln2624 to Ser2653, Arg2665 to Gln2696, Met2688 to Gln2719, Val2738 to Ala2767, Gln2859 to Gln2890, Ile2909 to Lys2938, Ile2932 to Ala2963, Lys2954 to Gln2985, Arg3029 to Gln3060, Phe3079 to His3110, Arg3181 to Lys3210, and Phe3204 to Ser3235.

As to quaternary structure, interacts with KATNA1 and KATNB1; katanin complex formation KATNA1:KATNB1 is required for the association.

The protein localises to the cytoplasm. It is found in the cytoskeleton. The protein resides in the spindle. It localises to the nucleus. In terms of biological role, involved in mitotic spindle regulation and coordination of mitotic processes. The function in regulating microtubule dynamics at spindle poles including spindle orientation, astral microtubule density and poleward microtubule flux seems to depend on the association with the katanin complex formed by KATNA1 and KATNB1. Enhances the microtubule lattice severing activity of KATNA1 by recruiting the katanin complex to microtubules. Can block microtubule minus-end growth and reversely this function can be enhanced by the katanin complex. May have a preferential role in regulating neurogenesis. The chain is Abnormal spindle-like microcephaly-associated protein (ASPM) from Homo sapiens (Human).